A 181-amino-acid chain; its full sequence is Protein GrpE (181 aa).

The protein belongs to the GrpE family. In terms of assembly, homodimer.

It is found in the cytoplasm. In terms of biological role, participates actively in the response to hyperosmotic and heat shock by preventing the aggregation of stress-denatured proteins, in association with DnaK and GrpE. It is the nucleotide exchange factor for DnaK and may function as a thermosensor. Unfolded proteins bind initially to DnaJ; upon interaction with the DnaJ-bound protein, DnaK hydrolyzes its bound ATP, resulting in the formation of a stable complex. GrpE releases ADP from DnaK; ATP binding to DnaK triggers the release of the substrate protein, thus completing the reaction cycle. Several rounds of ATP-dependent interactions between DnaJ, DnaK and GrpE are required for fully efficient folding. This Delftia acidovorans (strain DSM 14801 / SPH-1) protein is Protein GrpE.